The sequence spans 445 residues: Exodeoxyribonuclease 7 large subunit (445 aa).

The protein belongs to the XseA family. In terms of assembly, heterooligomer composed of large and small subunits.

It is found in the cytoplasm. It catalyses the reaction Exonucleolytic cleavage in either 5'- to 3'- or 3'- to 5'-direction to yield nucleoside 5'-phosphates.. Its function is as follows. Bidirectionally degrades single-stranded DNA into large acid-insoluble oligonucleotides, which are then degraded further into small acid-soluble oligonucleotides. The protein is Exodeoxyribonuclease 7 large subunit of Shewanella halifaxensis (strain HAW-EB4).